The primary structure comprises 44 residues: MEKIANAVKSAIEAGQNQDWTKLGTSILDIVSNGVTELSKIFGF.

Belongs to the staphylococcal hemolytic protein family.

The protein localises to the secreted. Its function is as follows. Has hemolytic activity and also inhibits the growth of gonococci. In Staphylococcus haemolyticus (strain JCSC1435), this protein is Antibacterial protein 2 homolog.